A 332-amino-acid polypeptide reads, in one-letter code: Casein kinase II subunit alpha (332 aa).

One can recognise a Protein kinase domain in the interval 34-319; the sequence is YEVVRKVGRG…ALEAMTHPYF (286 aa). ATP is bound by residues 40 to 48 and Lys-63; that span reads VGRGKYSEV. The Proton acceptor role is filled by Asp-151.

Belongs to the protein kinase superfamily. Ser/Thr protein kinase family. CK2 subfamily. In terms of assembly, tetramer of two alpha and two beta chains (possible).

It carries out the reaction L-seryl-[protein] + ATP = O-phospho-L-seryl-[protein] + ADP + H(+). The enzyme catalyses L-threonyl-[protein] + ATP = O-phospho-L-threonyl-[protein] + ADP + H(+). Casein kinases are operationally defined by their preferential utilization of acidic proteins such as caseins as substrates. The alpha chain contains the catalytic site. In Zea mays (Maize), this protein is Casein kinase II subunit alpha (ACK2).